The following is a 195-amino-acid chain: Cysteine/O-acetylserine efflux protein (195 aa).

At 1–9 the chain is on the periplasmic side; the sequence is MTPILLSAF. A helical membrane pass occupies residues 10–32; it reads WTYTLITAMTPGPNNILALSSAT. Over 33–46 the chain is Cytoplasmic; that stretch reads SHGFRQSTRVLAGM. Residues 47 to 67 traverse the membrane as a helical segment; it reads SLGFLIVMLLCAGISFSLAVI. Topologically, residues 68–69 are periplasmic; it reads DP. A helical transmembrane segment spans residues 70–90; sequence AAVHLLSWAGAAYIVWLAWKI. The Cytoplasmic portion of the chain corresponds to 91–104; that stretch reads ATSPTKEDGLQAKP. A helical transmembrane segment spans residues 105 to 125; the sequence is ISFWASFALQFVNVKIILYGV. At 126–141 the chain is on the periplasmic side; that stretch reads TALSTFVLPQTQALSW. The helical transmembrane segment at 142-162 threads the bilayer; the sequence is VVGVSVLLAMIGTFGNVCWAL. Residues 163-176 lie on the Cytoplasmic side of the membrane; that stretch reads AGHLFQRLFRQYGR. The chain crosses the membrane as a helical span at residues 177–194; the sequence is QLNIVLALLLVYCAVRIF. A topological domain (periplasmic) is located at residue Tyr-195.

It belongs to the Rht family.

The protein resides in the cell inner membrane. It catalyses the reaction O-acetyl-L-serine(in) = O-acetyl-L-serine(out). The enzyme catalyses L-cysteine(in) = L-cysteine(out). Exporter of O-acetylserine (OAS) and cysteine. This Shigella flexneri serotype 5b (strain 8401) protein is Cysteine/O-acetylserine efflux protein (eamB).